We begin with the raw amino-acid sequence, 568 residues long: MKFDKYEYLQDLMRRRGFAWGSFEIYGGARGFYDYGPLGATIKRKIEKKIREAFIREGFFEIETPDITPEQVFIASGHVEKFVDPLVECKKCGARFRADHLIEETLGIDVEGKSAEEMTKIIREHNIRCPECGGELSDVWYFNLMFETYIGPYKDKKAYLRPETAQGIFVNFKRLNAFARNKLPFGVFQIGKAYRNEISPRQGMIRLREFTQAEVEIFFNPNETEHPHFDEVKDEVLRLYPIEHQLKDLGMIELTAEEAVKKGYVMNTFFAYYMVMIKRILLDIGIPEDKIRFRQQLPEERAHYSADTWDAEIYSERFGWVECVGLAYRTDYDLSRHMKMSGADLTVMIHYDKPKIVKKLNVTLNMKKVGPKLKEKVKEINEKLKSMSQEELRKLVEELNANGKVIIEGHELEKEDLIIKEVEEKIQGEKIVPHVLEPSFGIDRPFYLLLENSLTVDEDGRVYLKIKKDMAPIEVAVLPLVAKEPLTTIAYEIYRNLQKEGFIVVYDEKDSIGKRYMRYDEIGTPYCVTVDNQTPEDGTVTIRDRDTREQIRVKIEEVPRKLKELIFG.

Positions 97 and 163 each coordinate substrate. ATP-binding positions include 195–197, 205–210, 322–323, and 441–444; these read RNE, IRLREF, EC, and GIDR. 210-214 contacts substrate; sequence FTQAE. 437 to 441 contributes to the substrate binding site; sequence EPSFG.

Belongs to the class-II aminoacyl-tRNA synthetase family.

The protein localises to the cytoplasm. It catalyses the reaction tRNA(Gly) + glycine + ATP = glycyl-tRNA(Gly) + AMP + diphosphate. Its function is as follows. Catalyzes the attachment of glycine to tRNA(Gly). The sequence is that of Glycine--tRNA ligase from Pyrococcus furiosus (strain ATCC 43587 / DSM 3638 / JCM 8422 / Vc1).